We begin with the raw amino-acid sequence, 92 residues long: Large ribosomal subunit protein eL37 (92 aa).

Residues C19, C22, C34, and C37 each contribute to the Zn(2+) site. The C4-type zinc finger occupies 19–37 (CRRCGRSSYHIQKSKCAQC).

The protein belongs to the eukaryotic ribosomal protein eL37 family. It depends on Zn(2+) as a cofactor.

Its function is as follows. Binds to the 23S rRNA. This chain is Large ribosomal subunit protein eL37 (RpL37), found in Spodoptera frugiperda (Fall armyworm).